Here is a 286-residue protein sequence, read N- to C-terminus: Shikimate dehydrogenase (NADP(+)) (286 aa).

Residues 19-21 (SVS) and threonine 66 contribute to the shikimate site. Lysine 70 serves as the catalytic Proton acceptor. The shikimate site is built by asparagine 91 and aspartate 106. Residues 130–134 (GAGGS) and alanine 225 contribute to the NADP(+) site. Residue tyrosine 227 participates in shikimate binding. Glycine 248 lines the NADP(+) pocket.

The protein belongs to the shikimate dehydrogenase family. As to quaternary structure, homodimer.

It catalyses the reaction shikimate + NADP(+) = 3-dehydroshikimate + NADPH + H(+). Its pathway is metabolic intermediate biosynthesis; chorismate biosynthesis; chorismate from D-erythrose 4-phosphate and phosphoenolpyruvate: step 4/7. Functionally, involved in the biosynthesis of the chorismate, which leads to the biosynthesis of aromatic amino acids. Catalyzes the reversible NADPH linked reduction of 3-dehydroshikimate (DHSA) to yield shikimate (SA). In Dehalococcoides mccartyi (strain ATCC BAA-2266 / KCTC 15142 / 195) (Dehalococcoides ethenogenes (strain 195)), this protein is Shikimate dehydrogenase (NADP(+)).